A 101-amino-acid chain; its full sequence is Small ribosomal subunit protein uS14 (101 aa).

The protein belongs to the universal ribosomal protein uS14 family. As to quaternary structure, part of the 30S ribosomal subunit. Contacts proteins S3 and S10.

In terms of biological role, binds 16S rRNA, required for the assembly of 30S particles and may also be responsible for determining the conformation of the 16S rRNA at the A site. This chain is Small ribosomal subunit protein uS14, found in Histophilus somni (strain 2336) (Haemophilus somnus).